We begin with the raw amino-acid sequence, 220 residues long: Nucleoside diphosphate kinase, mitochondrial (220 aa).

The N-terminal 57 residues, 1-57 (MFSRFARAFPKILASGASQRTFATVQKAFANPTSKKLIVGSSLLIGSAFATTSFVAC), are a transit peptide targeting the mitochondrion. Residues Lys-80, Phe-128, Arg-156, Thr-162, Arg-173, and Asn-183 each coordinate ATP. Catalysis depends on His-186, which acts as the Pros-phosphohistidine intermediate.

Belongs to the NDK family. It depends on Mg(2+) as a cofactor.

It is found in the mitochondrion intermembrane space. The enzyme catalyses a 2'-deoxyribonucleoside 5'-diphosphate + ATP = a 2'-deoxyribonucleoside 5'-triphosphate + ADP. It carries out the reaction a ribonucleoside 5'-diphosphate + ATP = a ribonucleoside 5'-triphosphate + ADP. Its function is as follows. Major role in the synthesis of nucleoside triphosphates other than ATP. The ATP gamma phosphate is transferred to the NDP beta phosphate via a ping-pong mechanism, using a phosphorylated active-site intermediate. This chain is Nucleoside diphosphate kinase, mitochondrial (ndkM), found in Dictyostelium discoideum (Social amoeba).